A 269-amino-acid polypeptide reads, in one-letter code: GTP cyclohydrolase FolE2 (269 aa).

The protein belongs to the GTP cyclohydrolase IV family.

It carries out the reaction GTP + H2O = 7,8-dihydroneopterin 3'-triphosphate + formate + H(+). Its pathway is cofactor biosynthesis; 7,8-dihydroneopterin triphosphate biosynthesis; 7,8-dihydroneopterin triphosphate from GTP: step 1/1. Converts GTP to 7,8-dihydroneopterin triphosphate. The protein is GTP cyclohydrolase FolE2 of Burkholderia vietnamiensis (strain G4 / LMG 22486) (Burkholderia cepacia (strain R1808)).